The primary structure comprises 274 residues: 2,3,4,5-tetrahydropyridine-2,6-dicarboxylate N-succinyltransferase (274 aa).

The protein belongs to the transferase hexapeptide repeat family.

It localises to the cytoplasm. It catalyses the reaction (S)-2,3,4,5-tetrahydrodipicolinate + succinyl-CoA + H2O = (S)-2-succinylamino-6-oxoheptanedioate + CoA. Its pathway is amino-acid biosynthesis; L-lysine biosynthesis via DAP pathway; LL-2,6-diaminopimelate from (S)-tetrahydrodipicolinate (succinylase route): step 1/3. In Salmonella heidelberg (strain SL476), this protein is 2,3,4,5-tetrahydropyridine-2,6-dicarboxylate N-succinyltransferase.